The chain runs to 478 residues: Trigger factor (478 aa).

A compositionally biased stretch (basic and acidic residues) spans 154-167 (MAKDSRSFEPREEG). 2 disordered regions span residues 154–173 (MAKD…AQSG) and 441–478 (KEAL…KAAG). One can recognise a PPIase FKBP-type domain in the interval 173-258 (GDRVTIDFVG…VKAVAAPGET (86 aa)).

The protein belongs to the FKBP-type PPIase family. Tig subfamily.

It localises to the cytoplasm. The catalysed reaction is [protein]-peptidylproline (omega=180) = [protein]-peptidylproline (omega=0). In terms of biological role, involved in protein export. Acts as a chaperone by maintaining the newly synthesized protein in an open conformation. Functions as a peptidyl-prolyl cis-trans isomerase. This Methylorubrum extorquens (strain CM4 / NCIMB 13688) (Methylobacterium extorquens) protein is Trigger factor.